The sequence spans 147 residues: Large ribosomal subunit protein uL15 (147 aa).

Basic residues predominate over residues Met1 to Gly28. Residues Met1–Asn43 form a disordered region. The span at Gly29–Gly38 shows a compositional bias: gly residues.

This sequence belongs to the universal ribosomal protein uL15 family. Part of the 50S ribosomal subunit.

Its function is as follows. Binds to the 23S rRNA. This is Large ribosomal subunit protein uL15 from Pyrococcus abyssi (strain GE5 / Orsay).